Reading from the N-terminus, the 766-residue chain is MGKKQNNRKVVKSQRKSHREKEEETLAKLQERIDAYDPVVDEKSISQFSDLPISEETARGLKEASFASLTDIQKKTIPISLKGEDVMGTAKTGSGKTLAFLIPTIESLIRNKITEYDGLAALIISPTRELAVQIFEVLVKIGKHNNFSAGLVTGGKDVKYEKERVSKMNILVGTPGRISQHLNESVGMETSNLQVLVLDEADRCLDMGFKKQIDNILGHLPPTRQTLLFSATQSDSVKDLARLSLANPKRVGISSDQELSATPESLEQYYIKIPLDEKLDVLWSFIKSHLKSKILVFFSSSKQVQYAYETFRTLQPGISLLKLYGRHKQTSRMETTMKFSQAQHACLFATDIVARGLDFPAIDWVVQIDCPEDAATYVHRVGRAARFGRAGKSLMMLLPSEENGMLKRLNNNKIELKFMNIKQKNKKTIRPQLQSLCFQDPMIKNLGQRAFISYFRSVYVQKDKDIFKIDELPSDKFARSLGLPGAPKIKFKGGSDNKEKKNMSRQLAALSKSNNEGDVVPEEDKKVRTKYDRMFERKNQTILSDHYLNLTGSKADTAEKSDDDDEDFMAVKRQDHELRDDELPDLSIPVSKRSAKKALSKKASVAGKGNANKLKFDDDGVAHAIYELEDEEDFKKQGDARVQKDTFLNKETELMNNADIEDKLTAKEKRQEKKRKRKEMEKNMRQESDDEDENIQTVVSIGGDDIDLDRDLEHSSADEDVPEPKKPKWFDNDKNVNKDEDDGVVEYDEPQTLEDLEALTSKLLEH.

A compositionally biased stretch (basic residues) spans 1–18 (MGKKQNNRKVVKSQRKSH). The tract at residues 1–25 (MGKKQNNRKVVKSQRKSHREKEEET) is disordered. The Q motif signature appears at 46-74 (SQFSDLPISEETARGLKEASFASLTDIQK). The Helicase ATP-binding domain occupies 77-251 (IPISLKGEDV…RLSLANPKRV (175 aa)). 90–97 (AKTGSGKT) is an ATP binding site. The short motif at 199–202 (DEAD) is the DEAD box element. The Helicase C-terminal domain occupies 265 to 437 (SLEQYYIKIP…TIRPQLQSLC (173 aa)). Disordered regions lie at residues 488–525 (KIKF…EEDK), 572–614 (KRQD…ANKL), and 649–752 (NKET…EPQT). Basic and acidic residues-rich tracts occupy residues 493–502 (GGSDNKEKKN), 572–581 (KRQDHELRDD), 660–671 (IEDKLTAKEKRQ), 678–687 (KEMEKNMRQE), and 709–738 (DRDL…NVNK). The segment covering 739–752 (DEDDGVVEYDEPQT) has biased composition (acidic residues).

Belongs to the DEAD box helicase family. DDX10/DBP4 subfamily. In terms of assembly, interacts with the U3 and U14 snoRNAs. Associates with pre-ribosomal complexes.

It is found in the nucleus. The protein resides in the nucleolus. The catalysed reaction is ATP + H2O = ADP + phosphate + H(+). In terms of biological role, ATP-dependent RNA helicase required for ribosome biogenesis. Involved in the release of U14 snoRNA in pre-ribosomal complexes. Required for pre-rRNA cleavage at site A2. In Debaryomyces hansenii (strain ATCC 36239 / CBS 767 / BCRC 21394 / JCM 1990 / NBRC 0083 / IGC 2968) (Yeast), this protein is ATP-dependent RNA helicase DBP4 (DBP4).